A 187-amino-acid polypeptide reads, in one-letter code: Orotate phosphoribosyltransferase (187 aa).

5-phospho-alpha-D-ribose 1-diphosphate is bound by residues R103, K104, K107, and E129 to S137. Positions 133 and 161 each coordinate orotate.

Belongs to the purine/pyrimidine phosphoribosyltransferase family. PyrE subfamily. As to quaternary structure, homodimer. It depends on Mg(2+) as a cofactor.

The catalysed reaction is orotidine 5'-phosphate + diphosphate = orotate + 5-phospho-alpha-D-ribose 1-diphosphate. Its pathway is pyrimidine metabolism; UMP biosynthesis via de novo pathway; UMP from orotate: step 1/2. Functionally, catalyzes the transfer of a ribosyl phosphate group from 5-phosphoribose 1-diphosphate to orotate, leading to the formation of orotidine monophosphate (OMP). This Methanosarcina acetivorans (strain ATCC 35395 / DSM 2834 / JCM 12185 / C2A) protein is Orotate phosphoribosyltransferase.